The primary structure comprises 142 residues: Small ribosomal subunit protein uS12 (142 aa).

It belongs to the universal ribosomal protein uS12 family. Part of the 30S ribosomal subunit.

Its function is as follows. With S4 and S5 plays an important role in translational accuracy. Located at the interface of the 30S and 50S subunits. This chain is Small ribosomal subunit protein uS12, found in Methanocorpusculum labreanum (strain ATCC 43576 / DSM 4855 / Z).